The following is a 388-amino-acid chain: Xylose isomerase (388 aa).

Residues H54 and D57 contribute to the active site. Mg(2+) contacts are provided by E181, E217, H220, D245, D255, D257, and D287.

This sequence belongs to the xylose isomerase family. As to quaternary structure, homotetramer. Mg(2+) is required as a cofactor.

The protein localises to the cytoplasm. It catalyses the reaction alpha-D-xylose = alpha-D-xylulofuranose. The chain is Xylose isomerase from Streptomyces avermitilis (strain ATCC 31267 / DSM 46492 / JCM 5070 / NBRC 14893 / NCIMB 12804 / NRRL 8165 / MA-4680).